We begin with the raw amino-acid sequence, 130 residues long: Sirohydrochlorin cobaltochelatase (130 aa).

H12 functions as the Proton acceptor in the catalytic mechanism. H12 lines the Co(2+) pocket. Ni(2+) is bound at residue H12. Residues E48 and 73–78 (LASGVH) each bind substrate. Co(2+) is bound at residue H78. Residue H78 participates in Ni(2+) binding.

Belongs to the CbiX family. CbiXS subfamily. As to quaternary structure, homotetramer; dimer of dimers.

The enzyme catalyses Co-sirohydrochlorin + 2 H(+) = sirohydrochlorin + Co(2+). It carries out the reaction Ni-sirohydrochlorin + 2 H(+) = sirohydrochlorin + Ni(2+). Its pathway is cofactor biosynthesis; adenosylcobalamin biosynthesis; cob(II)yrinate a,c-diamide from sirohydrochlorin (anaerobic route): step 1/10. Catalyzes the insertion of Co(2+) into sirohydrochlorin as part of the anaerobic pathway to cobalamin biosynthesis (Potential). Involved in the biosynthesis of the unique nickel-containing tetrapyrrole coenzyme F430, the prosthetic group of methyl-coenzyme M reductase (MCR), which plays a key role in methanogenesis and anaerobic methane oxidation. Catalyzes the insertion of Ni(2+) into sirohydrochlorin to yield Ni-sirohydrochlorin. The sequence is that of Sirohydrochlorin cobaltochelatase from Methanosarcina acetivorans (strain ATCC 35395 / DSM 2834 / JCM 12185 / C2A).